A 67-amino-acid polypeptide reads, in one-letter code: Conotoxin AbVIO (67 aa).

The first 17 residues, 1–17 (VIIIAVLFLTACQLIAT), serve as a signal peptide directing secretion. A propeptide spanning residues 18-40 (ASYARSERKHPDLRLSSRNSKLS) is cleaved from the precursor. Cystine bridges form between Cys43-Cys57, Cys50-Cys61, and Cys56-Cys66.

This sequence belongs to the conotoxin O1 superfamily. As to expression, expressed by the venom duct.

The protein localises to the secreted. The polypeptide is Conotoxin AbVIO (Conus abbreviatus (Abbreviated cone)).